We begin with the raw amino-acid sequence, 476 residues long: 3-ketoacyl-CoA synthase 12 (476 aa).

Positions 1–25 (MDLLFLFFSLLLSYLFFKIWKLIDS) are cleaved as a signal peptide. The region spanning 26–313 (KQDKDCYILD…FMLKLLIKKI (288 aa)) is the FAE domain. Residues Cys168, His247, His344, His348, His377, and Asn381 contribute to the active site.

The protein belongs to the thiolase-like superfamily. Chalcone/stilbene synthases family. In terms of tissue distribution, expressed in siliques, flowers and leaves.

Its subcellular location is the endoplasmic reticulum. It catalyses the reaction a very-long-chain acyl-CoA + malonyl-CoA + H(+) = a very-long-chain 3-oxoacyl-CoA + CO2 + CoA. It participates in lipid metabolism; fatty acid biosynthesis. This is 3-ketoacyl-CoA synthase 12 from Arabidopsis thaliana (Mouse-ear cress).